The chain runs to 512 residues: ETS translocation variant 3 (512 aa).

A DNA-binding region (ETS) is located at residues 35-116 (IQLWHFILEL…KGKRFTYKFN (82 aa)). Positions 136–222 (VPQSAPPVPT…NAIGGGGIGH (87 aa)) are disordered. Residues serine 139, serine 159, and serine 315 each carry the phosphoserine modification. Positions 158-184 (HSPTNDVQPGRFSASSLTASGQESSNG) are enriched in polar residues. The tract at residues 336–512 (PEESTQFSIK…QGLATAAADA (177 aa)) is disordered. Over residues 380–406 (IKVEPASEKDPESLRQSAREKEEHTQE) the composition is skewed to basic and acidic residues. Residue lysine 381 forms a Glycyl lysine isopeptide (Lys-Gly) (interchain with G-Cter in SUMO2) linkage. Lysine 388 is modified (N6-acetyllysine; alternate). Lysine 388 is covalently cross-linked (Glycyl lysine isopeptide (Lys-Gly) (interchain with G-Cter in SUMO2); alternate). Over residues 443 to 452 (EPLEVTEDIE) the composition is skewed to acidic residues. Basic and acidic residues-rich tracts occupy residues 453 to 468 (DRPG…KEDA) and 479 to 491 (RWND…ELSK).

The protein belongs to the ETS family.

Its subcellular location is the nucleus. Its function is as follows. Transcriptional repressor that contribute to growth arrest during terminal macrophage differentiation by repressing target genes involved in Ras-dependent proliferation. Represses MMP1 promoter activity. In Pan troglodytes (Chimpanzee), this protein is ETS translocation variant 3 (ETV3).